The sequence spans 880 residues: Alanine--tRNA ligase (880 aa).

The disordered stretch occupies residues 414–443 (TVDESEFESEMEKQRNRARKARSGGDTEGW). Residues histidine 566, histidine 570, cysteine 668, and histidine 672 each coordinate Zn(2+).

It belongs to the class-II aminoacyl-tRNA synthetase family. Requires Zn(2+) as cofactor.

It localises to the cytoplasm. The catalysed reaction is tRNA(Ala) + L-alanine + ATP = L-alanyl-tRNA(Ala) + AMP + diphosphate. Its function is as follows. Catalyzes the attachment of alanine to tRNA(Ala) in a two-step reaction: alanine is first activated by ATP to form Ala-AMP and then transferred to the acceptor end of tRNA(Ala). Also edits incorrectly charged Ser-tRNA(Ala) and Gly-tRNA(Ala) via its editing domain. The sequence is that of Alanine--tRNA ligase from Alkaliphilus metalliredigens (strain QYMF).